Here is a 131-residue protein sequence, read N- to C-terminus: uncharacterized protein (131 aa).

This is an uncharacterized protein from Rickettsia conorii (strain ATCC VR-613 / Malish 7).